The chain runs to 287 residues: Hydroxysteroid 11-beta-dehydrogenase 1-like protein (287 aa).

The first 15 residues, 1–15 (MKVLLLTGLGALFFA), serve as a signal peptide directing secretion. NADP(+) is bound by residues 36–62 (GASA…TAHT), 87–88 (DM), and 114–116 (NHI). Serine 165 lines the substrate pocket. Tyrosine 178 acts as the Proton acceptor in catalysis. NADP(+)-binding positions include 178-182 (YSAAK) and 211-217 (GLRDRAS).

It belongs to the short-chain dehydrogenases/reductases (SDR) family.

It is found in the secreted. The enzyme catalyses cortisone + NADPH + H(+) = cortisol + NADP(+). In terms of biological role, unidirectional NADP(+)-dependent cortisol dehydrogenase (in vitro). This chain is Hydroxysteroid 11-beta-dehydrogenase 1-like protein (HSD11B1L), found in Macaca fascicularis (Crab-eating macaque).